The sequence spans 708 residues: MATARGGSGPDPGSRGLLLLSFSVVLAGLCGGNSVERKIYIPLNKTAPCVRLLNATHQIGCQSSISGDTGVIHVVEKEDDLKWVLTDGPNPPYMVLLEGKLFTRDIMEKLKGETSRIAGLAVTLAKPNSTSSFSPSVQCPNDGFGIYSNSYGPEFAHCKKTLWNELGNGLAYDDFSFPIFLLEDENETKVIKQCYQDHNLGQNGSAPSFPLCAMQLFSHMHAVISTATCMRRSFIQSTFSINPEIVCDPLSDYNVWSMLKPINTSGGLEPDVRVVVAATRLDSRSFFWNVAPGAESAVASFVTQLAAAEALHKAPDVTTLPRNVMFVFFQGETFDYIGSSRMVYDMENGKFPVRLENIDSFVELGQVALRTSLELWMHTDPMSQKNESVKNQVEDLLVTLEQSGADTPQVVLSRLVQSQALPPSSLQRFLRARNISGVVLADHSGSFHNRYYQSIYDTAENINVTYPESQSPEEDLNFVTDTAKALADVATVLARALYKLAGGTNFNNSIQADPQTVTRLLYGFLVRANNSWFQSILRHDLRSYLDDGPLQHYIAVSSPTNTTYVVQYALANLTGKVTNLTQEQCQDPSKVPNESKDLYEYSWVQGPWNSNKTERLPRCVRSTVRLARALSPAFELSQWSSTEYSTWAESRWKDIQARIFLIASKELEFITLIVGFSILVFSLIVTYCINAKADVLFVAPREPGAVSY.

Positions 1–34 (MATARGGSGPDPGSRGLLLLSFSVVLAGLCGGNS) are cleaved as a signal peptide. Residues 35–668 (VERKIYIPLN…IFLIASKELE (634 aa)) lie on the Lumenal side of the membrane. 3 N-linked (GlcNAc...) asparagine glycosylation sites follow: N44, N54, and N128. A disulfide bridge links C49 with C61. A disulfide bridge connects residues C139 and C158. 2 N-linked (GlcNAc...) asparagine glycosylation sites follow: N186 and N203. Intrachain disulfides connect C194-C212 and C229-C247. 11 N-linked (GlcNAc...) asparagine glycosylation sites follow: N263, N386, N434, N463, N507, N529, N561, N572, N579, N593, and N611. A disulfide bond links C585 and C619. The chain crosses the membrane as a helical span at residues 669 to 689 (FITLIVGFSILVFSLIVTYCI). Over 690–708 (NAKADVLFVAPREPGAVSY) the chain is Cytoplasmic.

This sequence belongs to the nicastrin family. As to quaternary structure, component of the gamma-secretase complex. The functional gamma-secretase complex is composed of at least four polypeptides: a presenilin homodimer (PSEN1 or PSEN2), nicastrin (NCSTN), APH1 (APH1A or APH1B) and PEN2. Binds to proteolytic processed C-terminal fragments C83 and C99 of the amyloid precursor protein (APP). Interacts with PSEN1 and PSEN2. In terms of processing, N-glycosylated.

The protein resides in the membrane. The protein localises to the cytoplasmic vesicle membrane. Its subcellular location is the melanosome. Essential subunit of the gamma-secretase complex, an endoprotease complex that catalyzes the intramembrane cleavage of integral membrane proteins such as Notch receptors and APP (amyloid-beta precursor protein). The gamma-secretase complex plays a role in Notch and Wnt signaling cascades and regulation of downstream processes via its role in processing key regulatory proteins, and by regulating cytosolic CTNNB1 levels. This chain is Nicastrin (Ncstn), found in Rattus norvegicus (Rat).